The primary structure comprises 251 residues: Enolase-phosphatase E1 (251 aa).

Residues Asp13 and Glu15 each coordinate Mg(2+). Residues 137–138 (SS) and Lys183 contribute to the substrate site. Asp210 contributes to the Mg(2+) binding site.

The protein belongs to the HAD-like hydrolase superfamily. MasA/MtnC family. In terms of assembly, monomer. It depends on Mg(2+) as a cofactor.

Its subcellular location is the cytoplasm. It is found in the nucleus. It carries out the reaction 5-methylsulfanyl-2,3-dioxopentyl phosphate + H2O = 1,2-dihydroxy-5-(methylsulfanyl)pent-1-en-3-one + phosphate. The protein operates within amino-acid biosynthesis; L-methionine biosynthesis via salvage pathway; L-methionine from S-methyl-5-thio-alpha-D-ribose 1-phosphate: step 3/6. Its pathway is amino-acid biosynthesis; L-methionine biosynthesis via salvage pathway; L-methionine from S-methyl-5-thio-alpha-D-ribose 1-phosphate: step 4/6. Its function is as follows. Bifunctional enzyme that catalyzes the enolization of 2,3-diketo-5-methylthiopentyl-1-phosphate (DK-MTP-1-P) into the intermediate 2-hydroxy-3-keto-5-methylthiopentenyl-1-phosphate (HK-MTPenyl-1-P), which is then dephosphorylated to form the acireductone 1,2-dihydroxy-3-keto-5-methylthiopentene (DHK-MTPene). This is Enolase-phosphatase E1 from Candida glabrata (strain ATCC 2001 / BCRC 20586 / JCM 3761 / NBRC 0622 / NRRL Y-65 / CBS 138) (Yeast).